The sequence spans 193 residues: dCTP deaminase (193 aa).

Residues 110-115 (RSSLAR), D128, 136-138 (VLE), Y171, K178, and Q182 each bind dCTP. E138 (proton donor/acceptor) is an active-site residue. The segment at 169–193 (RPYNRRQDAKYKDQQGAVASRIDKD) is disordered.

It belongs to the dCTP deaminase family. In terms of assembly, homotrimer.

It catalyses the reaction dCTP + H2O + H(+) = dUTP + NH4(+). It participates in pyrimidine metabolism; dUMP biosynthesis; dUMP from dCTP (dUTP route): step 1/2. In terms of biological role, catalyzes the deamination of dCTP to dUTP. This Pectobacterium carotovorum subsp. carotovorum (strain PC1) protein is dCTP deaminase.